A 252-amino-acid chain; its full sequence is PF03932 family protein CutC (252 aa).

The protein belongs to the CutC family.

The protein localises to the cytoplasm. This chain is PF03932 family protein CutC, found in Sodalis glossinidius (strain morsitans).